The sequence spans 437 residues: GTPase Der (437 aa).

EngA-type G domains follow at residues A3–N167 and P177–S353. Residues G9–S16, D56–W60, N119–D122, G183–S190, D230–I234, and N295–D298 each bind GTP. A KH-like domain is found at T354–K437.

It belongs to the TRAFAC class TrmE-Era-EngA-EngB-Septin-like GTPase superfamily. EngA (Der) GTPase family. Associates with the 50S ribosomal subunit.

GTPase that plays an essential role in the late steps of ribosome biogenesis. The polypeptide is GTPase Der (Porphyromonas gingivalis (strain ATCC BAA-308 / W83)).